A 56-amino-acid chain; its full sequence is Large ribosomal subunit protein eL40 (56 aa).

This sequence belongs to the eukaryotic ribosomal protein eL40 family.

This is Large ribosomal subunit protein eL40 from Metallosphaera sedula (strain ATCC 51363 / DSM 5348 / JCM 9185 / NBRC 15509 / TH2).